The chain runs to 597 residues: uncharacterized protein (597 aa).

The next 5 helical transmembrane spans lie at 37–57 (VLII…LWPV), 67–87 (IFWL…LQFA), 109–129 (GGER…YAAI), 134–154 (SVSL…FIAW), and 162–182 (ALMT…LAIV). The Histidine kinase domain occupies 393 to 597 (HQLARDLHDG…QITIFVPIES (205 aa)).

The protein resides in the cell membrane. This is an uncharacterized protein from Chloroflexus aurantiacus (strain ATCC 29366 / DSM 635 / J-10-fl).